A 676-amino-acid polypeptide reads, in one-letter code: Hemin receptor (676 aa).

The signal sequence occupies residues 1-28 (MLRSTSDRFRWSSLSLAIACTLPLATQA). Positions 44-51 (DTMVVTAT) match the TonB box motif. Positions 56 to 167 (SSFEAPMMVT…LGGVIAYETV (112 aa)) constitute a TBDR plug domain. Residues 178 to 676 (NSGYRVYSSA…NVKFFVSYQW (499 aa)) enclose the TBDR beta-barrel domain. A TonB C-terminal box motif is present at residues 659–676 (QGIPQDGRNVKFFVSYQW).

This sequence belongs to the TonB-dependent receptor family.

The protein resides in the cell outer membrane. Functionally, this protein is involved in the initial step of iron uptake by binding hemin, an iron chelatin siderophore that allows the bacteria to extract iron from the environment. This chain is Hemin receptor (hmuR), found in Yersinia pestis.